A 202-amino-acid chain; its full sequence is Holliday junction resolvase RecU (202 aa).

Mg(2+) is bound by residues threonine 85, aspartate 87, glutamate 100, and glutamine 119.

This sequence belongs to the RecU family. The cofactor is Mg(2+).

It is found in the cytoplasm. It carries out the reaction Endonucleolytic cleavage at a junction such as a reciprocal single-stranded crossover between two homologous DNA duplexes (Holliday junction).. In terms of biological role, endonuclease that resolves Holliday junction intermediates in genetic recombination. Cleaves mobile four-strand junctions by introducing symmetrical nicks in paired strands. Promotes annealing of linear ssDNA with homologous dsDNA. Required for DNA repair, homologous recombination and chromosome segregation. The chain is Holliday junction resolvase RecU from Streptococcus equi subsp. zooepidemicus (strain MGCS10565).